Consider the following 205-residue polypeptide: Probable GTP-binding protein EngB (205 aa).

The 175-residue stretch at 27–201 folds into the EngB-type G domain; it reads EGMEIAFAGR…AAKLDSWFSS (175 aa). Residues 35–42, 62–66, 80–83, 147–150, and 180–182 each bind GTP; these read GRSNAGKS, GRTQL, DLPG, TKAD, and FSA. Mg(2+) contacts are provided by Ser42 and Thr64.

The protein belongs to the TRAFAC class TrmE-Era-EngA-EngB-Septin-like GTPase superfamily. EngB GTPase family. Mg(2+) is required as a cofactor.

Its function is as follows. Necessary for normal cell division and for the maintenance of normal septation. The protein is Probable GTP-binding protein EngB of Mannheimia succiniciproducens (strain KCTC 0769BP / MBEL55E).